The chain runs to 546 residues: CTP synthase (546 aa).

An amidoligase domain region spans residues 1–269 (MADTKYIFVT…DKVTLKKLAL (269 aa)). S15 contributes to the CTP binding site. Residue S15 coordinates UTP. 16–21 (SLGKGI) is a binding site for ATP. L-glutamine is bound at residue Y56. D73 is a binding site for ATP. Mg(2+) contacts are provided by D73 and E143. Residues 150-152 (DIE), 190-195 (KTKPTQ), and K226 each bind CTP. Residues 190 to 195 (KTKPTQ) and K226 each bind UTP. The Glutamine amidotransferase type-1 domain occupies 295 to 537 (HIGLIGKYVE…VKAAHEHSVK (243 aa)). G357 contributes to the L-glutamine binding site. C384 acts as the Nucleophile; for glutamine hydrolysis in catalysis. L-glutamine-binding positions include 385 to 388 (LGMQ), E408, and R465. Catalysis depends on residues H510 and E512.

It belongs to the CTP synthase family. Homotetramer.

It carries out the reaction UTP + L-glutamine + ATP + H2O = CTP + L-glutamate + ADP + phosphate + 2 H(+). It catalyses the reaction L-glutamine + H2O = L-glutamate + NH4(+). The catalysed reaction is UTP + NH4(+) + ATP = CTP + ADP + phosphate + 2 H(+). The protein operates within pyrimidine metabolism; CTP biosynthesis via de novo pathway; CTP from UDP: step 2/2. Allosterically activated by GTP, when glutamine is the substrate; GTP has no effect on the reaction when ammonia is the substrate. The allosteric effector GTP functions by stabilizing the protein conformation that binds the tetrahedral intermediate(s) formed during glutamine hydrolysis. Inhibited by the product CTP, via allosteric rather than competitive inhibition. Catalyzes the ATP-dependent amination of UTP to CTP with either L-glutamine or ammonia as the source of nitrogen. Regulates intracellular CTP levels through interactions with the four ribonucleotide triphosphates. The polypeptide is CTP synthase (Christiangramia forsetii (strain DSM 17595 / CGMCC 1.15422 / KT0803) (Gramella forsetii)).